The sequence spans 545 residues: Glucose-6-phosphate isomerase (545 aa).

The active-site Proton donor is the Glu-351. Active-site residues include His-382 and Lys-510.

The protein belongs to the GPI family.

The protein resides in the cytoplasm. The enzyme catalyses alpha-D-glucose 6-phosphate = beta-D-fructose 6-phosphate. It participates in carbohydrate biosynthesis; gluconeogenesis. The protein operates within carbohydrate degradation; glycolysis; D-glyceraldehyde 3-phosphate and glycerone phosphate from D-glucose: step 2/4. In terms of biological role, catalyzes the reversible isomerization of glucose-6-phosphate to fructose-6-phosphate. This Shewanella sp. (strain MR-7) protein is Glucose-6-phosphate isomerase.